The following is a 418-amino-acid chain: Serine/threonine-protein kinase PCRK1 (418 aa).

The segment at 36 to 63 (GSEFNSRDVSGTSTESSMGRKNSYPPVS) is disordered. The Protein kinase domain occupies 84–369 (FSRSVMIGEG…EVLEMVNKIV (286 aa)). ATP is bound by residues 90–98 (IGEGGFGCV) and Lys-118. Asp-218 (proton acceptor) is an active-site residue. A phosphoserine mark is found at Ser-373, Ser-377, and Ser-385.

Belongs to the protein kinase superfamily. Ser/Thr protein kinase family. In terms of assembly, interacts with FLS2.

The protein resides in the cell membrane. The catalysed reaction is L-seryl-[protein] + ATP = O-phospho-L-seryl-[protein] + ADP + H(+). It catalyses the reaction L-threonyl-[protein] + ATP = O-phospho-L-threonyl-[protein] + ADP + H(+). Its function is as follows. Involved in the activation of early immune responses. Plays a role in pattern-triggered immunity (PTI) induced by pathogen-associated molecular patterns (PAMPs) and damage-associated molecular patterns (DAMPs). Contributes to PTI in response to the bacterial pathogen Pseudomonas syringae pv maculicola strain ES4326. Contributes to PTI in response to the bacterial pathogen Pseudomonas syringae pv tomato strain DC3000. Functions redundantly with PCRK2 in basal resistance against bacterial pathogens and in regulation of plant immunity. Functions together with PCRK2 downstream of the PAMP receptor FLS2. Contributes to the induction of SARD1 and CBP60G, which are transcriptional activator of ICS1, an enzyme involved in salicylate (SA) biosynthesis upon pathogen attack. The protein is Serine/threonine-protein kinase PCRK1 of Arabidopsis thaliana (Mouse-ear cress).